Here is a 668-residue protein sequence, read N- to C-terminus: Tastin (668 aa).

Disordered regions lie at residues 1 to 102, 154 to 177, and 189 to 285; these read MTTL…GGSN, ERKG…PRIP, and FSRL…GRHH. Ser-16 is modified (phosphoserine). Composition is skewed to polar residues over residues 27 to 37 and 55 to 64; these read QRCQDFSSVKS and PRSTQRQRPL. Ser-97 is modified (phosphoserine). The segment covering 158–168 has biased composition (polar residues); the sequence is GTTQRGQSARS. Phosphoserine is present on Ser-169. 2 stretches are compositionally biased toward basic and acidic residues: residues 227–246 and 269–282; these read ELRR…DRRT and GEQE…DGGG. Phosphoserine is present on residues Ser-306, Ser-324, and Ser-338. Disordered regions lie at residues 364-392 and 462-502; these read ITLQ…HQEL and TEPL…AEPE.

Directly binds bystin, and indirectly trophinin.

The protein resides in the cytoplasm. In terms of biological role, could be involved with bystin and trophinin in a cell adhesion molecule complex that mediates an initial attachment of the blastocyst to uterine epithelial cells at the time of the embryo implantation. This is Tastin from Mus musculus (Mouse).